The chain runs to 53 residues: Toxin CjTL7 (53 aa).

Positions methionine 1 to glycine 22 are cleaved as a signal peptide. The residue at position 51 (tryptophan 51) is a Tryptophan amide.

Contains 4 disulfide bonds.

The protein localises to the secreted. Its subcellular location is the nematocyst. In terms of biological role, in vivo, only causes a weak change in behavior in shrimps (C.multidentata) (slight twitching of the walking legs), but no lethal effect is observed. No activity is observed when injected into fly larvae (M.domestica). This Epiactis japonica (Sea anemone) protein is Toxin CjTL7.